We begin with the raw amino-acid sequence, 301 residues long: Ubiquinone biosynthesis protein COQ4, mitochondrial (301 aa).

Residues 1–46 (MEVTLKRSAALARQTTPLLRPLRPVATYPSNNNNNNNPTPQQRRPY) constitute a mitochondrion transit peptide. The tract at residues 14 to 48 (QTTPLLRPLRPVATYPSNNNNNNNPTPQQRRPYSL) is disordered. Residues 38-48 (PTPQQRRPYSL) are compositionally biased toward polar residues. Positions 185, 186, 189, and 201 each coordinate Zn(2+).

It belongs to the COQ4 family. In terms of assembly, component of a multi-subunit COQ enzyme complex, composed of at least COQ3, COQ4, COQ5, COQ6, COQ7 and COQ9. It depends on Zn(2+) as a cofactor.

Its subcellular location is the mitochondrion inner membrane. It catalyses the reaction a 4-hydroxy-3-methoxy-5-(all-trans-polyprenyl)benzoate + H(+) = a 2-methoxy-6-(all-trans-polyprenyl)phenol + CO2. It functions in the pathway cofactor biosynthesis; ubiquinone biosynthesis. Its function is as follows. Lyase that catalyzes the C1-decarboxylation of 4-hydroxy-3-methoxy-5-(all-trans-polyprenyl)benzoic acid into 2-methoxy-6-(all-trans-polyprenyl)phenol during ubiquinone biosynthesis. The sequence is that of Ubiquinone biosynthesis protein COQ4, mitochondrial from Podospora anserina (strain S / ATCC MYA-4624 / DSM 980 / FGSC 10383) (Pleurage anserina).